A 133-amino-acid chain; its full sequence is 6,7-dimethyl-8-ribityllumazine synthase (133 aa).

Residues F11, 43–45 (AYD), and 67–69 (AIV) each bind 5-amino-6-(D-ribitylamino)uracil. 72–73 (DT) contributes to the (2S)-2-hydroxy-3-oxobutyl phosphate binding site. H75 functions as the Proton donor in the catalytic mechanism. 5-amino-6-(D-ribitylamino)uracil is bound at residue F100. R115 lines the (2S)-2-hydroxy-3-oxobutyl phosphate pocket.

It belongs to the DMRL synthase family.

It carries out the reaction (2S)-2-hydroxy-3-oxobutyl phosphate + 5-amino-6-(D-ribitylamino)uracil = 6,7-dimethyl-8-(1-D-ribityl)lumazine + phosphate + 2 H2O + H(+). It functions in the pathway cofactor biosynthesis; riboflavin biosynthesis; riboflavin from 2-hydroxy-3-oxobutyl phosphate and 5-amino-6-(D-ribitylamino)uracil: step 1/2. In terms of biological role, catalyzes the formation of 6,7-dimethyl-8-ribityllumazine by condensation of 5-amino-6-(D-ribitylamino)uracil with 3,4-dihydroxy-2-butanone 4-phosphate. This is the penultimate step in the biosynthesis of riboflavin. This chain is 6,7-dimethyl-8-ribityllumazine synthase, found in Halobacterium salinarum (strain ATCC 29341 / DSM 671 / R1).